Here is a 134-residue protein sequence, read N- to C-terminus: Small ribosomal subunit protein uS8c (134 aa).

The protein belongs to the universal ribosomal protein uS8 family. As to quaternary structure, part of the 30S ribosomal subunit.

The protein resides in the plastid. The protein localises to the chloroplast. One of the primary rRNA binding proteins, it binds directly to 16S rRNA central domain where it helps coordinate assembly of the platform of the 30S subunit. The chain is Small ribosomal subunit protein uS8c (rps8) from Nicotiana tomentosiformis (Tobacco).